Here is a 393-residue protein sequence, read N- to C-terminus: S-adenosylmethionine synthase (393 aa).

H16 contributes to the ATP binding site. Residue D18 coordinates Mg(2+). K(+) is bound at residue E44. L-methionine is bound by residues E57 and Q100. Residues 100 to 110 form a flexible loop region; sequence QSNDIAQGVDH. ATP is bound by residues 167 to 169, 238 to 239, D247, 253 to 254, A270, and K274; these read DAK, RF, and RK. D247 lines the L-methionine pocket. Position 278 (K278) interacts with L-methionine.

This sequence belongs to the AdoMet synthase family. Homotetramer; dimer of dimers. Requires Mg(2+) as cofactor. The cofactor is K(+).

The protein localises to the cytoplasm. The enzyme catalyses L-methionine + ATP + H2O = S-adenosyl-L-methionine + phosphate + diphosphate. It functions in the pathway amino-acid biosynthesis; S-adenosyl-L-methionine biosynthesis; S-adenosyl-L-methionine from L-methionine: step 1/1. Its function is as follows. Catalyzes the formation of S-adenosylmethionine (AdoMet) from methionine and ATP. The overall synthetic reaction is composed of two sequential steps, AdoMet formation and the subsequent tripolyphosphate hydrolysis which occurs prior to release of AdoMet from the enzyme. This is S-adenosylmethionine synthase from Acidovorax sp. (strain JS42).